An 89-amino-acid chain; its full sequence is Small ribosomal subunit protein uS15 (89 aa).

This sequence belongs to the universal ribosomal protein uS15 family. Part of the 30S ribosomal subunit. Forms a bridge to the 50S subunit in the 70S ribosome, contacting the 23S rRNA.

One of the primary rRNA binding proteins, it binds directly to 16S rRNA where it helps nucleate assembly of the platform of the 30S subunit by binding and bridging several RNA helices of the 16S rRNA. Functionally, forms an intersubunit bridge (bridge B4) with the 23S rRNA of the 50S subunit in the ribosome. This chain is Small ribosomal subunit protein uS15, found in Bordetella avium (strain 197N).